The primary structure comprises 143 residues: Boletus edulis lectin (143 aa).

Beta-D-Gal-(1-&gt;3)-alpha-D-GalNAc is bound by residues alanine 30, 49-50 (SG), and 72-73 (HN). Residues 49 to 50 (SG) and 72 to 73 (HN) each bind N-acetyl-alpha-D-galactosamine. N,N'-diacetylchitobiose-binding positions include 79-82 (DVVT), arginine 103, and tyrosine 114. N-acetyl-alpha-D-glucosamine is bound by residues 79-82 (DVVT), arginine 103, and tyrosine 114.

This sequence belongs to the fungal fruit body lectin family. In terms of assembly, homotetramer.

Lectin that recognizes O-linked galactose-beta-1,3-N-acetylgalactosamine, a disaccharide (Thomsen-Friedenreich antigen or T-disaccharide), present on cell surface glycoproteins. Can also bind chitin, N,N'-diacetylchitobiose, N-acetylgalactosamine and N-acetylglucosamine. Inhibits proliferation of colon, breast and liver cancer cell lines (in vitro). The polypeptide is Boletus edulis lectin (Boletus edulis (King bolete)).